The sequence spans 160 residues: SsrA-binding protein (160 aa).

The tract at residues 134–160 (RKAHDKREAVKERDWNRDKARLMRDRG) is disordered. The span at 138–160 (DKREAVKERDWNRDKARLMRDRG) shows a compositional bias: basic and acidic residues.

It belongs to the SmpB family.

The protein localises to the cytoplasm. Functionally, required for rescue of stalled ribosomes mediated by trans-translation. Binds to transfer-messenger RNA (tmRNA), required for stable association of tmRNA with ribosomes. tmRNA and SmpB together mimic tRNA shape, replacing the anticodon stem-loop with SmpB. tmRNA is encoded by the ssrA gene; the 2 termini fold to resemble tRNA(Ala) and it encodes a 'tag peptide', a short internal open reading frame. During trans-translation Ala-aminoacylated tmRNA acts like a tRNA, entering the A-site of stalled ribosomes, displacing the stalled mRNA. The ribosome then switches to translate the ORF on the tmRNA; the nascent peptide is terminated with the 'tag peptide' encoded by the tmRNA and targeted for degradation. The ribosome is freed to recommence translation, which seems to be the essential function of trans-translation. The sequence is that of SsrA-binding protein from Azorhizobium caulinodans (strain ATCC 43989 / DSM 5975 / JCM 20966 / LMG 6465 / NBRC 14845 / NCIMB 13405 / ORS 571).